We begin with the raw amino-acid sequence, 319 residues long: Inositol-tetrakisphosphate 1-kinase 1 (319 aa).

Ser-2 carries the post-translational modification N-acetylserine. 2 residues coordinate 1D-myo-inositol 1,3,4-trisphosphate: Lys-18 and Lys-60. Arg-95 and Lys-145 together coordinate ATP. The ATP-grasp domain occupies Leu-99–His-318. Positions 156 and 188 each coordinate 1D-myo-inositol 1,3,4-trisphosphate. ATP is bound by residues Gln-177–Lys-188 and Ser-203. Asp-273, Asp-288, and Asn-290 together coordinate Mg(2+). Asn-290 provides a ligand contact to 1D-myo-inositol 1,3,4-trisphosphate.

It belongs to the ITPK1 family. In terms of assembly, monomer. Requires Mg(2+) as cofactor. Expressed in siliques.

The enzyme catalyses 1D-myo-inositol 3,4,5,6-tetrakisphosphate + ATP = 1D-myo-inositol 1,3,4,5,6-pentakisphosphate + ADP + H(+). It carries out the reaction 1D-myo-inositol 1,3,4-trisphosphate + ATP = 1D-myo-inositol 1,3,4,5-tetrakisphosphate + ADP + H(+). It catalyses the reaction 1D-myo-inositol 1,3,4-trisphosphate + ATP = 1D-myo-inositol 1,3,4,6-tetrakisphosphate + ADP + H(+). Its function is as follows. Kinase that can phosphorylate various inositol polyphosphate such as Ins(3,4,5,6)P4 or Ins(1,3,4)P3. Phosphorylates Ins(3,4,5,6)P4 at position 1 to form Ins(1,3,4,5,6)P5. This reaction is thought to have regulatory importance, since Ins(3,4,5,6)P4 is an inhibitor of plasma membrane Ca(2+)-activated Cl(-) channels, while Ins(1,3,4,5,6)P5 is not. Also phosphorylates Ins(1,3,4)P3 on O-5 and O-6 to form Ins(1,3,4,6)P4, an essential molecule in the hexakisphosphate (InsP6) pathway. The protein is Inositol-tetrakisphosphate 1-kinase 1 (ITPK1) of Arabidopsis thaliana (Mouse-ear cress).